We begin with the raw amino-acid sequence, 491 residues long: Sterol 14-alpha demethylase (491 aa).

Residues 20-40 (LWMLSTVALLSILVVSVVINV) traverse the membrane as a helical segment. C430 contacts heme.

The protein belongs to the cytochrome P450 family. Requires heme as cofactor.

The protein localises to the endoplasmic reticulum membrane. It carries out the reaction a 14alpha-methyl steroid + 3 reduced [NADPH--hemoprotein reductase] + 3 O2 = a Delta(14) steroid + formate + 3 oxidized [NADPH--hemoprotein reductase] + 4 H2O + 4 H(+). The catalysed reaction is a 14alpha-methyl steroid + reduced [NADPH--hemoprotein reductase] + O2 = a 14alpha-hydroxymethyl steroid + oxidized [NADPH--hemoprotein reductase] + H2O + H(+). It catalyses the reaction a 14alpha-hydroxymethyl steroid + reduced [NADPH--hemoprotein reductase] + O2 = a 14alpha-formyl steroid + oxidized [NADPH--hemoprotein reductase] + 2 H2O + H(+). The enzyme catalyses a 14alpha-formyl steroid + reduced [NADPH--hemoprotein reductase] + O2 = a Delta(14) steroid + formate + oxidized [NADPH--hemoprotein reductase] + H2O + 2 H(+). It carries out the reaction lanosterol + 3 reduced [NADPH--hemoprotein reductase] + 3 O2 = 4,4-dimethyl-5alpha-cholesta-8,14,24-trien-3beta-ol + formate + 3 oxidized [NADPH--hemoprotein reductase] + 4 H2O + 4 H(+). The catalysed reaction is lanosterol + reduced [NADPH--hemoprotein reductase] + O2 = 32-hydroxylanosterol + oxidized [NADPH--hemoprotein reductase] + H2O + H(+). It catalyses the reaction 32-hydroxylanosterol + reduced [NADPH--hemoprotein reductase] + O2 = 32-oxolanosterol + oxidized [NADPH--hemoprotein reductase] + 2 H2O + H(+). The enzyme catalyses 32-oxolanosterol + reduced [NADPH--hemoprotein reductase] + O2 = 4,4-dimethyl-5alpha-cholesta-8,14,24-trien-3beta-ol + formate + oxidized [NADPH--hemoprotein reductase] + H2O + 2 H(+). It carries out the reaction eburicol + 3 reduced [NADPH--hemoprotein reductase] + 3 O2 = 14-demethyleburicol + formate + 3 oxidized [NADPH--hemoprotein reductase] + 4 H2O + 4 H(+). The catalysed reaction is eburicol + reduced [NADPH--hemoprotein reductase] + O2 = 32-hydroxyeburicol + oxidized [NADPH--hemoprotein reductase] + H2O + H(+). It catalyses the reaction 32-hydroxyeburicol + reduced [NADPH--hemoprotein reductase] + O2 = 32-oxoeburicol + oxidized [NADPH--hemoprotein reductase] + 2 H2O + H(+). The enzyme catalyses 32-oxoeburicol + reduced [NADPH--hemoprotein reductase] + O2 = 14-demethyleburicol + formate + oxidized [NADPH--hemoprotein reductase] + H2O + 2 H(+). The protein operates within steroid biosynthesis; sterol biosynthesis. Functionally, sterol 14alpha-demethylase, encoded by cyp51A, cyp51B and cyp51C, that plays a critical role in the third module of ergosterol biosynthesis pathway, being ergosterol the major sterol component in fungal membranes that participates in a variety of functions. The third module or late pathway involves the ergosterol synthesis itself through consecutive reactions that mainly occur in the endoplasmic reticulum (ER) membrane. In filamentous fungi, during the initial step of this module, lanosterol (lanosta-8,24-dien-3beta-ol) can be metabolized to eburicol. Sterol 14alpha-demethylase catalyzes the three-step oxidative removal of the 14alpha-methyl group (C-32) of both these sterols in the form of formate, and converts eburicol and lanosterol to 14-demethyleburicol (4,4,24-trimethylergosta-8,14,24(28)-trienol) and 4,4-dimethyl-5alpha-cholesta-8,14,24-trien-3beta-ol, respectively, which are further metabolized by other enzymes in the pathway to ergosterol. Can also use substrates not intrinsic to fungi, such as 24,25-dihydrolanosterol (DHL), producing 4,4'-dimethyl-8,14-cholestadien-3-beta-ol, but at lower rates than the endogenous substrates. As a target of azole drugs, plays a crucial role in azole susceptibility. The chain is Sterol 14-alpha demethylase from Aspergillus flavus (strain ATCC 200026 / FGSC A1120 / IAM 13836 / NRRL 3357 / JCM 12722 / SRRC 167).